A 332-amino-acid chain; its full sequence is GLIPR1-like protein 2 (332 aa).

In terms of domain architecture, SCP spans 57–191 (LHNELRGTVF…THAALFICNY (135 aa)). N145 is a glycosylation site (N-linked (GlcNAc...) asparagine). The helical transmembrane segment at 253-273 (IFILFLRVASLLLCVIVVLIV) threads the bilayer. A disordered region spans residues 293–332 (EGKTEVEIVMEEGEGEGEGGEGEGEGEEKEEEEMLEEDEQ). Residues 300 to 332 (IVMEEGEGEGEGGEGEGEGEEKEEEEMLEEDEQ) are compositionally biased toward acidic residues.

The protein belongs to the CRISP family.

It localises to the membrane. The polypeptide is GLIPR1-like protein 2 (Glipr1l2) (Mus musculus (Mouse)).